We begin with the raw amino-acid sequence, 227 residues long: Cytochrome c oxidase subunit 2 (227 aa).

At 1–14 the chain is on the mitochondrial intermembrane side; the sequence is MAYPFQLGFQDATS. A helical membrane pass occupies residues 15 to 45; that stretch reads PIMEELLHFHDHALMIVFLISSLVLYLISVM. Residues 46-59 lie on the Mitochondrial matrix side of the membrane; it reads LTTSLTHTSTMDAQ. Residues 60 to 87 traverse the membrane as a helical segment; that stretch reads EVETIWTILPAMILIMIALPSLRILYMM. Residues 88–227 are Mitochondrial intermembrane-facing; the sequence is DEINNPYLTV…YFEKWSSSML (140 aa). Residues His-161, Cys-196, Glu-198, Cys-200, His-204, and Met-207 each coordinate Cu cation. Glu-198 provides a ligand contact to Mg(2+). Tyr-218 carries the post-translational modification Phosphotyrosine.

The protein belongs to the cytochrome c oxidase subunit 2 family. In terms of assembly, component of the cytochrome c oxidase (complex IV, CIV), a multisubunit enzyme composed of 14 subunits. The complex is composed of a catalytic core of 3 subunits MT-CO1, MT-CO2 and MT-CO3, encoded in the mitochondrial DNA, and 11 supernumerary subunits COX4I, COX5A, COX5B, COX6A, COX6B, COX6C, COX7A, COX7B, COX7C, COX8 and NDUFA4, which are encoded in the nuclear genome. The complex exists as a monomer or a dimer and forms supercomplexes (SCs) in the inner mitochondrial membrane with NADH-ubiquinone oxidoreductase (complex I, CI) and ubiquinol-cytochrome c oxidoreductase (cytochrome b-c1 complex, complex III, CIII), resulting in different assemblies (supercomplex SCI(1)III(2)IV(1) and megacomplex MCI(2)III(2)IV(2)). Found in a complex with TMEM177, COA6, COX18, COX20, SCO1 and SCO2. Interacts with TMEM177 in a COX20-dependent manner. Interacts with COX20. Interacts with COX16. Requires Cu cation as cofactor.

The protein localises to the mitochondrion inner membrane. The catalysed reaction is 4 Fe(II)-[cytochrome c] + O2 + 8 H(+)(in) = 4 Fe(III)-[cytochrome c] + 2 H2O + 4 H(+)(out). Its function is as follows. Component of the cytochrome c oxidase, the last enzyme in the mitochondrial electron transport chain which drives oxidative phosphorylation. The respiratory chain contains 3 multisubunit complexes succinate dehydrogenase (complex II, CII), ubiquinol-cytochrome c oxidoreductase (cytochrome b-c1 complex, complex III, CIII) and cytochrome c oxidase (complex IV, CIV), that cooperate to transfer electrons derived from NADH and succinate to molecular oxygen, creating an electrochemical gradient over the inner membrane that drives transmembrane transport and the ATP synthase. Cytochrome c oxidase is the component of the respiratory chain that catalyzes the reduction of oxygen to water. Electrons originating from reduced cytochrome c in the intermembrane space (IMS) are transferred via the dinuclear copper A center (CU(A)) of subunit 2 and heme A of subunit 1 to the active site in subunit 1, a binuclear center (BNC) formed by heme A3 and copper B (CU(B)). The BNC reduces molecular oxygen to 2 water molecules using 4 electrons from cytochrome c in the IMS and 4 protons from the mitochondrial matrix. The polypeptide is Cytochrome c oxidase subunit 2 (MT-CO2) (Rousettus leschenaultii (Leschenault's rousette)).